A 469-amino-acid polypeptide reads, in one-letter code: Glutamate--tRNA ligase (469 aa).

A 'HIGH' region motif is present at residues 11-21 (PSPTGFIHLGN). Basic and acidic residues predominate over residues 114-131 (QREAGEKPRYDGTWRPEP). The disordered stretch occupies residues 114-139 (QREAGEKPRYDGTWRPEPGKVLPEPP). A 'KMSKS' region motif is present at residues 243-247 (KMSKR). An ATP-binding site is contributed by K246.

The protein belongs to the class-I aminoacyl-tRNA synthetase family. Glutamate--tRNA ligase type 1 subfamily. As to quaternary structure, monomer.

The protein localises to the cytoplasm. The enzyme catalyses tRNA(Glu) + L-glutamate + ATP = L-glutamyl-tRNA(Glu) + AMP + diphosphate. Catalyzes the attachment of glutamate to tRNA(Glu) in a two-step reaction: glutamate is first activated by ATP to form Glu-AMP and then transferred to the acceptor end of tRNA(Glu). The protein is Glutamate--tRNA ligase of Paraburkholderia phytofirmans (strain DSM 17436 / LMG 22146 / PsJN) (Burkholderia phytofirmans).